The following is a 149-amino-acid chain: Calmodulin-6 (149 aa).

4 consecutive EF-hand domains span residues 8–43, 44–79, 81–116, and 117–149; these read DQISEFKEAFSLFDKDGDGCITTKELGTVMRSLGQN, PTEAELQDMINEVDADGNGTIDFPEFLNLMARKMKD, DSEEELKEAFRVFDKDQNGFISAAELRHVMTNLGEK, and LSDEEVDEMIREADVDGDGQINYEEFVKVMMAK. Ca(2+) is bound by residues D21, D23, D25, C27, E32, D57, D59, N61, T63, E68, D94, D96, N98, E105, D130, D132, D134, Q136, and E141.

The protein belongs to the calmodulin family. In terms of assembly, interacts with KCBP.

Calmodulin mediates the control of a large number of enzymes, ion channels and other proteins by Ca(2+). Among the enzymes to be stimulated by the calmodulin-Ca(2+) complex are a number of protein kinases and phosphatases. In Arabidopsis thaliana (Mouse-ear cress), this protein is Calmodulin-6 (CAM6).